Reading from the N-terminus, the 87-residue chain is MKIRKILLSSALSFGMLISAVPALAAGTSSEVAVKNEEYDYDTIYRISPLPMDFQPTIEYNGYTYTLTRHYFDYSIGFYTAIYTKVV.

An N-terminal signal peptide occupies residues Met1–Ala25.

This is an uncharacterized protein from Bacillus subtilis (strain 168).